Reading from the N-terminus, the 199-residue chain is Recombination protein RecR (199 aa).

The segment at Cys-57 to Cys-72 adopts a C4-type zinc-finger fold. One can recognise a Toprim domain in the interval Thr-80–Pro-176.

Belongs to the RecR family.

May play a role in DNA repair. It seems to be involved in an RecBC-independent recombinational process of DNA repair. It may act with RecF and RecO. In Exiguobacterium sibiricum (strain DSM 17290 / CCUG 55495 / CIP 109462 / JCM 13490 / 255-15), this protein is Recombination protein RecR.